The following is a 316-amino-acid chain: Aspartate carbamoyltransferase catalytic subunit (316 aa).

Residues arginine 58 and threonine 59 each contribute to the carbamoyl phosphate site. Lysine 86 provides a ligand contact to L-aspartate. Carbamoyl phosphate contacts are provided by arginine 108, histidine 136, and glutamine 139. L-aspartate contacts are provided by arginine 169 and arginine 223. Carbamoyl phosphate contacts are provided by glycine 264 and proline 265.

This sequence belongs to the aspartate/ornithine carbamoyltransferase superfamily. ATCase family. As to quaternary structure, heterododecamer (2C3:3R2) of six catalytic PyrB chains organized as two trimers (C3), and six regulatory PyrI chains organized as three dimers (R2).

The enzyme catalyses carbamoyl phosphate + L-aspartate = N-carbamoyl-L-aspartate + phosphate + H(+). It participates in pyrimidine metabolism; UMP biosynthesis via de novo pathway; (S)-dihydroorotate from bicarbonate: step 2/3. Functionally, catalyzes the condensation of carbamoyl phosphate and aspartate to form carbamoyl aspartate and inorganic phosphate, the committed step in the de novo pyrimidine nucleotide biosynthesis pathway. This is Aspartate carbamoyltransferase catalytic subunit from Granulibacter bethesdensis (strain ATCC BAA-1260 / CGDNIH1).